Here is a 209-residue protein sequence, read N- to C-terminus: Uridine kinase (209 aa).

12–19 (GGSGSGKT) is an ATP binding site.

The protein belongs to the uridine kinase family.

The protein localises to the cytoplasm. It carries out the reaction uridine + ATP = UMP + ADP + H(+). The catalysed reaction is cytidine + ATP = CMP + ADP + H(+). It participates in pyrimidine metabolism; CTP biosynthesis via salvage pathway; CTP from cytidine: step 1/3. The protein operates within pyrimidine metabolism; UMP biosynthesis via salvage pathway; UMP from uridine: step 1/1. The chain is Uridine kinase from Streptococcus mutans serotype c (strain ATCC 700610 / UA159).